Consider the following 247-residue polypeptide: ATP synthase subunit a, chloroplastic (247 aa).

Helical transmembrane passes span Gln-38 to Val-58, Val-95 to Phe-115, Ile-134 to Thr-154, Leu-199 to Leu-219, and Gly-220 to Gly-240.

This sequence belongs to the ATPase A chain family. In terms of assembly, F-type ATPases have 2 components, CF(1) - the catalytic core - and CF(0) - the membrane proton channel. CF(1) has five subunits: alpha(3), beta(3), gamma(1), delta(1), epsilon(1). CF(0) has four main subunits: a, b, b' and c.

Its subcellular location is the plastid. The protein resides in the chloroplast thylakoid membrane. In terms of biological role, key component of the proton channel; it plays a direct role in the translocation of protons across the membrane. This Piper cenocladum (Ant piper) protein is ATP synthase subunit a, chloroplastic.